Reading from the N-terminus, the 217-residue chain is Insulin-like growth factor 2.S (217 aa).

An N-terminal signal peptide occupies residues 1–56 (MEQLSCKHRSSSVEAEAQLCRQTESRSTQLPRMSVMRHLFLLSITFLVYTLDSAKA). The b stretch occupies residues 57–83 (YRATETLCGGELVDTLQFVCGDRGFYF). 3 disulfide bridges follow: cysteine 64-cysteine 103, cysteine 76-cysteine 116, and cysteine 102-cysteine 107. Residues 84–96 (STNNGRSNRRPNR) form a c region. Residues 97–117 (GIVDVCCFKSCDLELLETYCA) form an a region. Residues 118 to 123 (KPTKNE) form a d region. A propeptide spans 124–217 (RDVSTAPATA…LQQASEPSHN (94 aa)) (e peptide).

The protein belongs to the insulin family.

The protein localises to the secreted. Its function is as follows. The insulin-like growth factors, isolated from plasma, are structurally and functionally related to insulin but have a much higher growth-promoting activity. Promotes anterior neural development. Acts as a ligand for integrin which is required for IGF2 signaling. The chain is Insulin-like growth factor 2.S from Xenopus laevis (African clawed frog).